Reading from the N-terminus, the 476-residue chain is MSSLRFLDLVKPFVPFLPEVQQPETKIPFNQKLMWTGLTLLIFLVMSQMPLYGIVSSDTSDPLYWLRMMMASNRGTLMELGITPIISSGMVFQLLAGTHMIDVNLDLKADRELYQTAQKLFAVILSIGTATVYVFTGLYGPPSDLGAGIVFLLILQLVVAGMIVILLDELLQKGYGLGSGISLFIATNICESIMWKAFSPTSINTGRGPEYEGAVIALFHLLMTWDNKQRALYEAFYRQNLPNIMNLLATLVVFAAVIYLQGFRVEIPVKSSRQRGARGSYPIRLFYTSNMPIMLQSALSSNVFLISQMLYSRFSENLLVRLFGVWEAKEGTAQLSAVSGLVYYMSPPLNFKDALLDPIHTAVYIAYMLTACAVFSKTWIEVSGSSPRDVAKQLKDQGLVMAGHREQSMYKELKRIIPTAAAFGGACIGALSVASDLMGALGSGTGTLLAVTIIYGYFEIAAKEGDLQGMKGMIMG.

The Cytoplasmic segment spans residues 1-33 (MSSLRFLDLVKPFVPFLPEVQQPETKIPFNQKL). The helical transmembrane segment at 34-54 (MWTGLTLLIFLVMSQMPLYGI) threads the bilayer. The Lumenal segment spans residues 55 to 76 (VSSDTSDPLYWLRMMMASNRGT). Residues 77 to 97 (LMELGITPIISSGMVFQLLAG) traverse the membrane as a helical segment. Over 98 to 119 (THMIDVNLDLKADRELYQTAQK) the chain is Cytoplasmic. The chain crosses the membrane as a helical span at residues 120-140 (LFAVILSIGTATVYVFTGLYG). Residues 141–146 (PPSDLG) lie on the Lumenal side of the membrane. The chain crosses the membrane as a helical span at residues 147–167 (AGIVFLLILQLVVAGMIVILL). Residues 168 to 246 (DELLQKGYGL…YRQNLPNIMN (79 aa)) are Cytoplasmic-facing. A helical transmembrane segment spans residues 247-267 (LLATLVVFAAVIYLQGFRVEI). Over 268–361 (PVKSSRQRGA…KDALLDPIHT (94 aa)) the chain is Lumenal. Residues 362–382 (AVYIAYMLTACAVFSKTWIEV) traverse the membrane as a helical segment. Residues 383–415 (SGSSPRDVAKQLKDQGLVMAGHREQSMYKELKR) are Cytoplasmic-facing. Residues 416 to 434 (IIPTAAAFGGACIGALSVA) traverse the membrane as a helical segment. Residues 435 to 440 (SDLMGA) lie on the Lumenal side of the membrane. A helical membrane pass occupies residues 441 to 458 (LGSGTGTLLAVTIIYGYF). Over 459-476 (EIAAKEGDLQGMKGMIMG) the chain is Cytoplasmic.

This sequence belongs to the SecY/SEC61-alpha family. In terms of assembly, heterotrimeric complex composed of SEC61-alpha, SEC61-beta and SEC61-gamma.

Its subcellular location is the endoplasmic reticulum membrane. In terms of biological role, appears to play a crucial role in the insertion of secretory and membrane polypeptides into the ER. It is required for assembly of membrane and secretory proteins and is essential for cell growth. It interacts with other membrane proteins required for protein translocation. Upon binding to SEC62/63 complex, secretory precursor polypeptides may engage SEC61 to begin membrane penetration event. A cycle of assembly and disassembly of SEC62/63 from SEC61 may govern the activity of the translocase. The protein is Protein transport protein SEC61 subunit alpha (sec-61) of Neurospora crassa (strain ATCC 24698 / 74-OR23-1A / CBS 708.71 / DSM 1257 / FGSC 987).